The chain runs to 329 residues: Serine dehydratase-like (329 aa).

N-acetylmethionine is present on Met-1. Lys-48 is subject to N6-(pyridoxal phosphate)lysine.

The protein belongs to the serine/threonine dehydratase family. In terms of assembly, monomer. Homodimer. Pyridoxal 5'-phosphate is required as a cofactor. As to expression, expressed in lung cancer cell lines.

The enzyme catalyses L-serine = pyruvate + NH4(+). It carries out the reaction L-threonine = 2-oxobutanoate + NH4(+). The catalysed reaction is L-glutamate = D-glutamate. Functionally, catalyzes the pyridoxal-phosphate-dependent dehydrative deamination of L-threonine and L-serine to ammonia and alpha-ketobutyrate and pyruvate, respectively. Also exhibits racemase activity towards L-glutamate and D-glutamate. In Homo sapiens (Human), this protein is Serine dehydratase-like (SDSL).